A 411-amino-acid chain; its full sequence is Arginine deiminase (411 aa).

The active-site Amidino-cysteine intermediate is the Cys-401.

Belongs to the arginine deiminase family.

The protein localises to the cytoplasm. It carries out the reaction L-arginine + H2O = L-citrulline + NH4(+). Its pathway is amino-acid degradation; L-arginine degradation via ADI pathway; carbamoyl phosphate from L-arginine: step 1/2. The sequence is that of Arginine deiminase from Streptococcus equi subsp. zooepidemicus (strain H70).